We begin with the raw amino-acid sequence, 501 residues long: MAAYQLDDTSLPAALPELPFAFARNFGVVLTERQGTPLLLCRPGVAPQTLLEVRRVAGCAFEVEQLGSDEFEELLMAHYQRDSSEARQLMEDLGNEMDFFALAEELPQSEDLLDADDDAPIIRLINAMLSEAIKEEASDIHIETFERVLVIRFRIDGVLREILRPHRKLASLLVSRIKVMSRMDIAEKRVPQDGRISLRIGGRAVDVRVSTMPSSYGERVVLRLLDKNNVRLELKQLGMTLANRNIISELIRKPHGIILVTGPTGSGKSTTLYAALSEINSRDRNILTVEDPIEYDLEGVGQTQVNTKVDMTFARGLRAILRQDPDVVMVGEIRDLETAQIAVQASLTGHLVMSTLHTNTAIGAITRMRDMGIEPFLLSSSLLAVLAQRLVRTLCPDCRAPRPITEQERLAMGMELAPDQQVWRPVGCEQCNHTGYRGRTGIHELVVIDEAVREAIHSASGELAIERLIRDHTPSIRRDGIDKVLKGQTSLEEVLRVTRED.

262–269 serves as a coordination point for ATP; sequence GPTGSGKS. Zn(2+) contacts are provided by Cys-395, Cys-398, Cys-428, and Cys-431.

It belongs to the GSP E family. Forms homooligomers; most probably hexamers. Interacts with ExeL/GspL. The cofactor is Zn(2+).

The protein resides in the cell inner membrane. The catalysed reaction is ATP + H2O + cellular proteinSide 1 = ADP + phosphate + cellular proteinSide 2.. In terms of biological role, ATPase component of the type II secretion system required for the energy-dependent secretion of extracellular factors such as proteases and toxins from the periplasm. Acts as a molecular motor to provide the energy that is required for assembly of the pseudopilus and the extrusion of substrates generated in the cytoplasm. The sequence is that of Type II secretion system protein E (exeE) from Aeromonas hydrophila.